The sequence spans 177 residues: Large ribosomal subunit protein uL6 (177 aa).

Residues E155–K177 are disordered.

It belongs to the universal ribosomal protein uL6 family. Part of the 50S ribosomal subunit.

In terms of biological role, this protein binds to the 23S rRNA, and is important in its secondary structure. It is located near the subunit interface in the base of the L7/L12 stalk, and near the tRNA binding site of the peptidyltransferase center. This chain is Large ribosomal subunit protein uL6, found in Bartonella tribocorum (strain CIP 105476 / IBS 506).